Here is a 964-residue protein sequence, read N- to C-terminus: Translation initiation factor IF-2 (964 aa).

A disordered region spans residues Ala26–Pro375. Composition is skewed to basic and acidic residues over residues Tyr49–Ser60, Val91–Lys103, Ala118–Pro154, Ile174–Gln206, Pro225–Gly236, Arg243–Gly252, and Lys328–Lys339. A tr-type G domain is found at Pro464–Lys633. Residues Gly473–Thr480 are G1. Gly473 to Thr480 provides a ligand contact to GTP. Residues Gly498–His502 are G2. Residues Asp519–Gly522 form a G3 region. Residues Asp519–His523 and Asn573–Asp576 each bind GTP. The tract at residues Asn573 to Asp576 is G4. Positions Ser609 to Lys611 are G5.

The protein belongs to the TRAFAC class translation factor GTPase superfamily. Classic translation factor GTPase family. IF-2 subfamily.

The protein resides in the cytoplasm. Its function is as follows. One of the essential components for the initiation of protein synthesis. Protects formylmethionyl-tRNA from spontaneous hydrolysis and promotes its binding to the 30S ribosomal subunits. Also involved in the hydrolysis of GTP during the formation of the 70S ribosomal complex. The polypeptide is Translation initiation factor IF-2 (Chromobacterium violaceum (strain ATCC 12472 / DSM 30191 / JCM 1249 / CCUG 213 / NBRC 12614 / NCIMB 9131 / NCTC 9757 / MK)).